Here is a 400-residue protein sequence, read N- to C-terminus: Autophagy-related protein 18 (400 aa).

WD repeat units follow at residues Ala-163–Gln-203 and Ser-208–Asp-247. The L/FRRG motif signature appears at Phe-204–Ser-208. Residues His-241 to His-296 are disordered. Basic and acidic residues predominate over residues Asp-256–Ala-268. The segment covering Ser-270–Thr-284 has biased composition (polar residues). WD repeat units lie at residues Lys-295–Arg-341 and Ser-353–Gly-393.

It belongs to the WD repeat PROPPIN family. As to quaternary structure, component of the PI(3,5)P2 regulatory complex.

Its subcellular location is the preautophagosomal structure membrane. It localises to the vacuole membrane. The protein localises to the endosome membrane. In terms of biological role, the PI(3,5)P2 regulatory complex regulates both the synthesis and turnover of phosphatidylinositol 3,5-bisphosphate (PtdIns(3,5)P2). Necessary for proper vacuole morphology. Plays an important role in osmotically-induced vacuole fragmentation. Required for cytoplasm to vacuole transport (Cvt) vesicle formation, pexophagy and starvation-induced autophagy. Involved in correct ATG9 trafficking to the pre-autophagosomal structure. Might also be involved in premeiotic DNA replication. In Ajellomyces capsulatus (strain NAm1 / WU24) (Darling's disease fungus), this protein is Autophagy-related protein 18 (ATG18).